The sequence spans 434 residues: 3-phosphoshikimate 1-carboxyvinyltransferase (434 aa).

Lys15, Ser16, and Arg20 together coordinate 3-phosphoshikimate. Lys15 lines the phosphoenolpyruvate pocket. Phosphoenolpyruvate is bound by residues Gly96 and Arg124. The 3-phosphoshikimate site is built by Ser169, Gln171, Ser195, Asp319, and Lys346. A phosphoenolpyruvate-binding site is contributed by Gln171. The Proton acceptor role is filled by Asp319. Arg350 and Arg394 together coordinate phosphoenolpyruvate.

This sequence belongs to the EPSP synthase family. In terms of assembly, monomer.

It is found in the cytoplasm. The catalysed reaction is 3-phosphoshikimate + phosphoenolpyruvate = 5-O-(1-carboxyvinyl)-3-phosphoshikimate + phosphate. It participates in metabolic intermediate biosynthesis; chorismate biosynthesis; chorismate from D-erythrose 4-phosphate and phosphoenolpyruvate: step 6/7. Functionally, catalyzes the transfer of the enolpyruvyl moiety of phosphoenolpyruvate (PEP) to the 5-hydroxyl of shikimate-3-phosphate (S3P) to produce enolpyruvyl shikimate-3-phosphate and inorganic phosphate. The protein is 3-phosphoshikimate 1-carboxyvinyltransferase of Chlorobaculum tepidum (strain ATCC 49652 / DSM 12025 / NBRC 103806 / TLS) (Chlorobium tepidum).